Reading from the N-terminus, the 420-residue chain is Tryptophan synthase beta chain (420 aa).

Lys-100 is subject to N6-(pyridoxal phosphate)lysine.

Belongs to the TrpB family. Tetramer of two alpha and two beta chains. Pyridoxal 5'-phosphate serves as cofactor.

The catalysed reaction is (1S,2R)-1-C-(indol-3-yl)glycerol 3-phosphate + L-serine = D-glyceraldehyde 3-phosphate + L-tryptophan + H2O. Its pathway is amino-acid biosynthesis; L-tryptophan biosynthesis; L-tryptophan from chorismate: step 5/5. In terms of biological role, the beta subunit is responsible for the synthesis of L-tryptophan from indole and L-serine. The protein is Tryptophan synthase beta chain of Pyrobaculum islandicum (strain DSM 4184 / JCM 9189 / GEO3).